The chain runs to 3323 residues: Mucin-3A (3323 aa).

The N-terminal stretch at 1–15 (MQLLGLLGLLWMLKA) is a signal peptide. Disordered regions lie at residues 218–243 (TISSTTRTTERTPLPTGSIHTTTSPT), 270–289 (TSMTTTASQPTATNTLSSPT), 325–345 (ISRSTPTSETTYTTSPTSTVT), 359–380 (GTLSTETSLPPTSSSLPTTETA), 539–677 (MSAS…PSTE), 700–722 (NASSMTTSETTYPNSPTGPGTNS), 734–756 (ETSSTATSLPPTSPLVSTAKTAK), 909–991 (SFSS…TLTP), 1170–1201 (ISSASPTSGTMVTSTTMTPSSLSTDTPSTTPT), 1318–1356 (AESALAPTTTTSFTTSPTMEPPSTTVATTGTGQTTFPSS), 1380–1442 (AMTS…TNPV), 1484–1509 (TMTETSSTATSLPPTSSLVSTAETAK), 1714–1746 (TPSSTVATTGTGQTTFTSSTATSPKTTTLTPTS), 1793–1844 (FTSS…YPTS), and 1900–2056 (TSHS…SHST). Residues 270–284 (TSMTTTASQPTATNT) show a composition bias toward low complexity. Residues 545-563 (GTTHTESISSPPASTSTLH) show a composition bias toward polar residues. Residues 564–618 (TTAESTLAPTTTTSFTTSTTMEPPSTTAATTGTGQTTFTSSTATFPETTTPTPTT) show a composition bias toward low complexity. Residues 619–629 (DMSTESLTTAM) show a composition bias toward polar residues. Over residues 630–676 (TSPPITSSVTSTNTVTSMTTTTSPPTTTNSFTSLTSMPLSSTPVPST) the composition is skewed to low complexity. Residues 700–721 (NASSMTTSETTYPNSPTGPGTN) are compositionally biased toward polar residues. Residues 909–918 (SFSSSMSESS) are compositionally biased toward low complexity. Polar residues predominate over residues 919–932 (AGTTHTESISSPRG). Residues 933-991 (TTSTLHTTVESTPSPTTTTSFTTSTMMEPPSSTVSTTGRGQTTFPSSTATFPETTTLTP) show a composition bias toward low complexity. A compositionally biased stretch (low complexity) spans 1324–1356 (PTTTTSFTTSPTMEPPSTTVATTGTGQTTFPSS). 32 tandem repeats follow at residues 1893–1910 (VTTTTKITSHSTPSFTSS), 1911–1927 (IATTETPSHSTPRFTSS), 1928–1944 (ITTTETPSHSTPRFTSS), 1945–1961 (ITNTKTTSHSSPSFTSS), 1962–1978 (ITTTETTSHNTPSLTSS), 1979–1995 (ITTTKTTSHSTPSYTSL), 1996–2012 (ITTTTTTSHSTPSFTSS), 2013–2029 (ITTTETTSHNTPSLTSS), 2030–2046 (ITTTETTSHSTPSFTSS), 2047–2062 (ITTETTSHSTPSFTSL), 2063–2079 (ITITEITSHSTLSYTTS), 2080–2096 (ITTTETPSHSTLSFTSS), 2097–2113 (ITTTETTSHSTPSFTSS), 2114–2130 (ITTSEMPSHSTPSFTSS), 2131–2147 (ITTTENATHSTPNFTSS), 2148–2164 (ITTTETTSHSTPSFTSL), 2165–2191 (ITTTETTSHRWGTTETTSYSTPSFTSS), 2192–2208 (NTITETTSHSTPSYITS), 2209–2225 (ITTTETPSSSTPSFSSS), 2226–2242 (ITTTETTSHSTPGFTSS), 2243–2259 (ITTTETTSHSTPSFTSS), 2260–2276 (ITTTETTSHDTPSFTSS), 2277–2293 (ITTSETPSHSTPSSTSL), 2294–2310 (ITTTKTTSHSTPSFTSS), 2311–2327 (ITTTETTSHSAHSFTSS), 2328–2344 (ITTTETTSHNTRSFTSS), 2345–2361 (ITTTETNSHSTTSFTSS), 2362–2378 (ITTTETTSHSTPSFSSS), 2379–2395 (ITTTETPLHSTPGLTSW), 2396–2412 (VTTTKTTSHITPGLTSS), 2413–2429 (ITTTETTSHSTPGFTSS), and 2430–2446 (ITTTETTSESTPSLSSS). A 32 X approximate tandem repeats, Ser/Thr-rich region spans residues 1893 to 2446 (VTTTTKITSH…SESTPSLSSS (554 aa)). Polar residues predominate over residues 1907–1947 (FTSSIATTETPSHSTPRFTSSITTTETPSHSTPRFTSSITN). Positions 1948 to 2056 (TKTTSHSSPS…ITTETTSHST (109 aa)) are enriched in low complexity. Composition is skewed to low complexity over residues 2100 to 2170 (TETT…TTET), 2177 to 2384 (TTET…TTET), 2393 to 2447 (TSWV…SSST), and 2464 to 2507 (TTSE…TTTT). Disordered stretches follow at residues 2100–2447 (TETT…SSST), 2464–2508 (TTSE…TTTD), 2578–2608 (TQTPPVLTSATGTQTSPAPTTVTFGSTDSST), 2631–2656 (IPSTHSSTLQTTPSTPSLQTSLTSTS), 2834–2858 (MMPESESSISPNASSSTGTGTVPTN), and 2897–2937 (SSLP…TSRR). The span at 2578-2602 (TQTPPVLTSATGTQTSPAPTTVTFG) shows a compositional bias: polar residues. 3 stretches are compositionally biased toward low complexity: residues 2633–2656 (STHSSTLQTTPSTPSLQTSLTSTS), 2834–2849 (MMPESESSISPNASSS), and 2905–2937 (TSSKSTHPSPPTTRTSETPVATTQTPTTLTSRR). Positions 2976-3009 (SGDRCQLQTRCQNGGQWDGLKCQCPSTFYGSSCE) constitute an EGF-like domain. 2 cysteine pairs are disulfide-bonded: Cys2980-Cys2986 and Cys2999-Cys3008. In terms of domain architecture, SEA spans 3018–3143 (DVVETEVGME…DSIKVNNNSK (126 aa)). A helical membrane pass occupies residues 3227-3247 (LVGGLTAGAALLVLLLLALGV).

Highly O-glycosylated and probably also N-glycosylated. In terms of tissue distribution, broad specificity; small intestine, colon, colonic tumors, heart, liver, thymus, prostate, pancreas and gall bladder.

It localises to the membrane. The protein localises to the secreted. Its function is as follows. Major glycoprotein component of a variety of mucus gels. Thought to provide a protective, lubricating barrier against particles and infectious agents at mucosal surfaces. May be involved in ligand binding and intracellular signaling. This is Mucin-3A from Homo sapiens (Human).